The primary structure comprises 240 residues: Large ribosomal subunit protein uL2 (240 aa).

Positions 200 to 240 are disordered; sequence HPFGGGGRQHPGKPKSISRNAPPGRKVGDIASKRTGRGGNE.

The protein belongs to the universal ribosomal protein uL2 family. As to quaternary structure, part of the 50S ribosomal subunit. Forms a bridge to the 30S subunit in the 70S ribosome. Interacts weakly with protein L37Ae.

Functionally, one of the primary rRNA binding proteins. Required for association of the 30S and 50S subunits to form the 70S ribosome, for tRNA binding and peptide bond formation. It has been suggested to have peptidyltransferase activity; this is somewhat controversial. Makes several contacts with the 16S rRNA in the 70S ribosome. This Haloarcula marismortui (strain ATCC 43049 / DSM 3752 / JCM 8966 / VKM B-1809) (Halobacterium marismortui) protein is Large ribosomal subunit protein uL2 (rpl2).